The chain runs to 1113 residues: StAR-related lipid transfer protein 13 (1113 aa).

The residue at position 1 (Met1) is an N-acetylmethionine. The SAM domain occupies 55-122 (QQEIEAKEAC…LNKCASMRLD (68 aa)). Disordered stretches follow at residues 164-218 (PVAD…HSAD), 230-256 (SSLP…RTRA), and 308-343 (NGDL…STVS). Positions 179–188 (NTASSESVLT) are enriched in polar residues. A compositionally biased stretch (low complexity) spans 197–214 (SIHSESSGGSDSRSQSGH). Polar residues predominate over residues 230 to 245 (SSLPQSTREGLNQSFH). The segment covering 322–340 (GLPCSSKSSGESSPLENSS) has biased composition (low complexity). Ser411 carries the post-translational modification Phosphoserine. 2 stretches are compositionally biased toward polar residues: residues 421 to 435 (SNGV…SLGR) and 529 to 549 (PNQV…TTPS). 2 disordered regions span residues 421 to 443 (SNGV…GMRE) and 514 to 578 (HSTL…GASL). In terms of domain architecture, Rho-GAP spans 663–868 (VPLIVHVQRT…HMITECNRLF (206 aa)). Positions 899–1109 (LAESGATFHT…SFQPLVAEGP (211 aa)) constitute an START domain.

As to quaternary structure, homodimer. Interacts with TAX1BP1.

It localises to the cytoplasm. It is found in the membrane. The protein localises to the mitochondrion membrane. Its subcellular location is the lipid droplet. Functionally, may function as a GTPase-activating protein. In Mus musculus (Mouse), this protein is StAR-related lipid transfer protein 13 (Stard13).